The following is a 395-amino-acid chain: uncharacterized protein (395 aa).

7 helical membrane passes run leucine 42–isoleucine 62, leucine 67–leucine 87, leucine 97–phenylalanine 117, isoleucine 128–proline 148, phenylalanine 196–leucine 216, isoleucine 241–alanine 261, and leucine 281–valine 301.

The protein localises to the cell membrane. This is an uncharacterized protein from Mycoplasma genitalium (strain ATCC 33530 / DSM 19775 / NCTC 10195 / G37) (Mycoplasmoides genitalium).